The sequence spans 135 residues: MTISEKSNESELYGERFISDAEIVCFPNPSPNRTYEISIELPEFTCQCPFSGYPDFAIIRLLYQPGEKVLELKSMKLYVNSFRNRKISHEEVANKMLDDFVAAANPSWMQLEADFNPRGNVHTVVRVSHGLKNNC.

C48 acts as the Thioimide intermediate in catalysis. The active-site Proton donor is D55. Substrate-binding positions include 70-72 and 89-90; these read LEL and HE.

Belongs to the GTP cyclohydrolase I family. QueF type 1 subfamily.

The protein localises to the cytoplasm. The enzyme catalyses 7-aminomethyl-7-carbaguanine + 2 NADP(+) = 7-cyano-7-deazaguanine + 2 NADPH + 3 H(+). Its pathway is tRNA modification; tRNA-queuosine biosynthesis. In terms of biological role, catalyzes the NADPH-dependent reduction of 7-cyano-7-deazaguanine (preQ0) to 7-aminomethyl-7-deazaguanine (preQ1). This is NADPH-dependent 7-cyano-7-deazaguanine reductase from Prochlorococcus marinus (strain SARG / CCMP1375 / SS120).